The chain runs to 208 residues: Ribosome maturation factor RimP (208 aa).

The interval 165–208 (TAQPKKGQRQGKEPAKESGQKKQLAEAAPRSGSKRSERGSEKRK) is disordered. 2 stretches are compositionally biased toward basic and acidic residues: residues 174-188 (QGKE…KKQL) and 198-208 (KRSERGSEKRK).

It belongs to the RimP family.

The protein resides in the cytoplasm. Its function is as follows. Required for maturation of 30S ribosomal subunits. This chain is Ribosome maturation factor RimP, found in Sorangium cellulosum (strain So ce56) (Polyangium cellulosum (strain So ce56)).